Consider the following 149-residue polypeptide: Dehydrin Rab15 (149 aa).

Residues Met-1–His-149 are disordered. Residues Lys-78–Gln-93 are compositionally biased toward basic and acidic residues. Positions Thr-100 to Gly-117 are enriched in gly residues. Residues Gly-132 to His-149 show a composition bias toward basic and acidic residues.

This sequence belongs to the plant dehydrin family.

This chain is Dehydrin Rab15 (RAB15), found in Triticum aestivum (Wheat).